Reading from the N-terminus, the 238-residue chain is Ephrin-A3 (238 aa).

The N-terminal stretch at 1-22 is a signal peptide; that stretch reads MAAAPLLLLLLLVPVPLLPLLA. One can recognise an Ephrin RBD domain in the interval 30–169; that stretch reads GNRHAVYWNS…RMKVFVCCAS (140 aa). 3 N-linked (GlcNAc...) asparagine glycosylation sites follow: N38, N67, and N100. 2 cysteine pairs are disulfide-bonded: C63/C110 and C99/C158. Residue G214 is the site of GPI-anchor amidated glycine attachment. The propeptide at 215 to 238 is removed in mature form; the sequence is TSPKREHLPLAVGIAFFLMTFLAS.

The protein belongs to the ephrin family. Interacts with EPHA8; activates EPHA8. Expressed in brain, skeletal muscle, spleen, thymus, prostate, testis, ovary, small intestine, and peripheral blood leukocytes.

Its subcellular location is the cell membrane. In terms of biological role, cell surface GPI-bound ligand for Eph receptors, a family of receptor tyrosine kinases which are crucial for migration, repulsion and adhesion during neuronal, vascular and epithelial development. Binds promiscuously Eph receptors residing on adjacent cells, leading to contact-dependent bidirectional signaling into neighboring cells. The signaling pathway downstream of the receptor is referred to as forward signaling while the signaling pathway downstream of the ephrin ligand is referred to as reverse signaling. In Homo sapiens (Human), this protein is Ephrin-A3 (EFNA3).